The following is a 442-amino-acid chain: tRNA-2-methylthio-N(6)-dimethylallyladenosine synthase (442 aa).

An MTTase N-terminal domain is found at 2 to 120; that stretch reads KKVFIRTFGC…LPKMIVDKET (119 aa). [4Fe-4S] cluster contacts are provided by Cys11, Cys49, Cys83, Cys157, Cys161, and Cys164. Positions 143–375 constitute a Radical SAM core domain; the sequence is RVEGGAAFVS…NEVIEAETAR (233 aa). Residues 378-441 enclose the TRAM domain; that stretch reads QTMVGTVQRC…TFSLRGKVVE (64 aa).

It belongs to the methylthiotransferase family. MiaB subfamily. As to quaternary structure, monomer. It depends on [4Fe-4S] cluster as a cofactor.

It localises to the cytoplasm. It carries out the reaction N(6)-dimethylallyladenosine(37) in tRNA + (sulfur carrier)-SH + AH2 + 2 S-adenosyl-L-methionine = 2-methylsulfanyl-N(6)-dimethylallyladenosine(37) in tRNA + (sulfur carrier)-H + 5'-deoxyadenosine + L-methionine + A + S-adenosyl-L-homocysteine + 2 H(+). Catalyzes the methylthiolation of N6-(dimethylallyl)adenosine (i(6)A), leading to the formation of 2-methylthio-N6-(dimethylallyl)adenosine (ms(2)i(6)A) at position 37 in tRNAs that read codons beginning with uridine. This is tRNA-2-methylthio-N(6)-dimethylallyladenosine synthase from Neisseria meningitidis serogroup B (strain ATCC BAA-335 / MC58).